A 176-amino-acid polypeptide reads, in one-letter code: Isopentenyl-diphosphate Delta-isomerase 1 (176 aa).

H23 and H30 together coordinate Mn(2+). The 135-residue stretch at 28-162 (HLHRAFSCFI…EEFCTPWFKK (135 aa)) folds into the Nudix hydrolase domain. C65 is a catalytic residue. C65 contacts Mg(2+). H67 contacts Mn(2+). Position 85 (E85) interacts with Mg(2+). 2 residues coordinate Mn(2+): E112 and E114. E114 is a catalytic residue.

This sequence belongs to the IPP isomerase type 1 family. As to quaternary structure, homodimer. Mg(2+) serves as cofactor. Requires Mn(2+) as cofactor.

It localises to the cytoplasm. The catalysed reaction is isopentenyl diphosphate = dimethylallyl diphosphate. Its pathway is isoprenoid biosynthesis; dimethylallyl diphosphate biosynthesis; dimethylallyl diphosphate from isopentenyl diphosphate: step 1/1. Functionally, catalyzes the 1,3-allylic rearrangement of the homoallylic substrate isopentenyl (IPP) to its highly electrophilic allylic isomer, dimethylallyl diphosphate (DMAPP). This chain is Isopentenyl-diphosphate Delta-isomerase 1, found in Photorhabdus laumondii subsp. laumondii (strain DSM 15139 / CIP 105565 / TT01) (Photorhabdus luminescens subsp. laumondii).